Consider the following 428-residue polypeptide: Histidine--tRNA ligase (428 aa).

It belongs to the class-II aminoacyl-tRNA synthetase family. As to quaternary structure, homodimer.

The protein resides in the cytoplasm. It carries out the reaction tRNA(His) + L-histidine + ATP = L-histidyl-tRNA(His) + AMP + diphosphate + H(+). This is Histidine--tRNA ligase from Azotobacter vinelandii (strain DJ / ATCC BAA-1303).